Reading from the N-terminus, the 521-residue chain is Glucose-1-phosphate adenylyltransferase large subunit 2, chloroplastic/amyloplastic (521 aa).

The transit peptide at 1–47 (MQFSSVLPLEGKACMSPVRRGSGGYGSERMRINCCSIRRNKALRRMC) directs the protein to the chloroplast.

This sequence belongs to the bacterial/plant glucose-1-phosphate adenylyltransferase family. In terms of assembly, heterotetramer. Abundant in the embryo and is also present in the endosperm.

The protein localises to the plastid. It is found in the chloroplast. The protein resides in the amyloplast. It catalyses the reaction alpha-D-glucose 1-phosphate + ATP + H(+) = ADP-alpha-D-glucose + diphosphate. It participates in glycan biosynthesis; starch biosynthesis. With respect to regulation, activated by 3'phosphoglycerate, inhibited by orthophosphate. Allosteric regulation. In terms of biological role, this protein plays a role in synthesis of starch. It catalyzes the synthesis of the activated glycosyl donor, ADP-glucose from Glc-1-P and ATP. In Zea mays (Maize), this protein is Glucose-1-phosphate adenylyltransferase large subunit 2, chloroplastic/amyloplastic (AGP2).